The chain runs to 267 residues: Glutamate racemase (267 aa).

Substrate is bound by residues 10–11 (DS) and 42–43 (YG). Catalysis depends on cysteine 73, which acts as the Proton donor/acceptor. 74-75 (NT) is a substrate binding site. The active-site Proton donor/acceptor is the cysteine 183. 184–185 (TH) is a substrate binding site.

The protein belongs to the aspartate/glutamate racemases family.

It carries out the reaction L-glutamate = D-glutamate. Its pathway is cell wall biogenesis; peptidoglycan biosynthesis. Its function is as follows. Provides the (R)-glutamate required for cell wall biosynthesis. The chain is Glutamate racemase from Lactobacillus helveticus (strain DPC 4571).